Here is a 224-residue protein sequence, read N- to C-terminus: Uracil phosphoribosyltransferase (224 aa).

5-phospho-alpha-D-ribose 1-diphosphate is bound at residue arginine 92. Lysine 109 is a GTP binding site. 5-phospho-alpha-D-ribose 1-diphosphate contacts are provided by residues arginine 117 and 145 to 153 (DPMLATGGT). Uracil contacts are provided by residues isoleucine 210 and 215-217 (GDA). Residue aspartate 216 coordinates 5-phospho-alpha-D-ribose 1-diphosphate.

It belongs to the UPRTase family. It depends on Mg(2+) as a cofactor.

The catalysed reaction is UMP + diphosphate = 5-phospho-alpha-D-ribose 1-diphosphate + uracil. The protein operates within pyrimidine metabolism; UMP biosynthesis via salvage pathway; UMP from uracil: step 1/1. Allosterically activated by GTP. Functionally, catalyzes the conversion of uracil and 5-phospho-alpha-D-ribose 1-diphosphate (PRPP) to UMP and diphosphate. The sequence is that of Uracil phosphoribosyltransferase (UPP) from Nicotiana tabacum (Common tobacco).